The sequence spans 488 residues: Kelch-like protein 15 (488 aa).

Positions 31 to 98 constitute a BTB domain; the sequence is LDVTLVIEDH…MYYGTIELSM (68 aa). In terms of domain architecture, BACK spans 133–237; that stretch reads CAEIMRLLDD…TPSSVFEKVK (105 aa). Kelch repeat units lie at residues 328-379, 381-426, and 428-473; these read FVFL…VIGR, VYAV…VLGN, and LYIT…NKCK.

As to quaternary structure, homodimer. Interacts with CUL3.

The protein resides in the nucleus. It participates in protein modification; protein ubiquitination. Functionally, substrate-specific adapter for CUL3 E3 ubiquitin-protein ligase complex. This chain is Kelch-like protein 15 (KLHL15), found in Gallus gallus (Chicken).